We begin with the raw amino-acid sequence, 230 residues long: Sugar fermentation stimulation protein homolog (230 aa).

It belongs to the SfsA family.

The chain is Sugar fermentation stimulation protein homolog from Clostridium tetani (strain Massachusetts / E88).